The primary structure comprises 494 residues: Probable cytosol aminopeptidase (494 aa).

Mn(2+) contacts are provided by Lys-260 and Asp-265. The active site involves Lys-272. Mn(2+) is bound by residues Asp-283, Asp-342, and Glu-344. The active site involves Arg-346.

The protein belongs to the peptidase M17 family. Requires Mn(2+) as cofactor.

It is found in the cytoplasm. The catalysed reaction is Release of an N-terminal amino acid, Xaa-|-Yaa-, in which Xaa is preferably Leu, but may be other amino acids including Pro although not Arg or Lys, and Yaa may be Pro. Amino acid amides and methyl esters are also readily hydrolyzed, but rates on arylamides are exceedingly low.. It carries out the reaction Release of an N-terminal amino acid, preferentially leucine, but not glutamic or aspartic acids.. In terms of biological role, presumably involved in the processing and regular turnover of intracellular proteins. Catalyzes the removal of unsubstituted N-terminal amino acids from various peptides. The chain is Probable cytosol aminopeptidase from Bacillus anthracis (strain CDC 684 / NRRL 3495).